The sequence spans 327 residues: Serpentine receptor class alpha-12 (327 aa).

Topologically, residues 1–18 (MGCASEIQAEIFTSFGQL) are extracellular. A helical membrane pass occupies residues 19–39 (FYASFQTILFLATIIGSLLAI). Topologically, residues 40-53 (FELCKKTTVPDSTR) are cytoplasmic. Residues 54–74 (VLLIGSLFFANAHEFAYFTAP) traverse the membrane as a helical segment. Over 75–98 (LKVFQLNIFNTNTSCYPLISTRDC) the chain is Extracellular. The chain crosses the membrane as a helical span at residues 99-119 (IPTTTVLAMGISGNMLIQSAL). Topologically, residues 120–138 (SIDRLLATIFPFSYSRMRA) are cytoplasmic. Residues 139-159 (LPGFVLLIMVLIPAMFTYSWI) traverse the membrane as a helical segment. The Extracellular segment spans residues 160-185 (RLDIVLDDYQMFCSQWSANISTRANT). The chain crosses the membrane as a helical span at residues 186–206 (FLEICSYLTVAHIIINCLIIL). The Cytoplasmic portion of the chain corresponds to 207–234 (RNRAIEKRCRFDVTQRYLTSENLKTTQA). Residues 235–255 (ICYLSIAQFLAMFMYSGGVLL) traverse the membrane as a helical segment. Topologically, residues 256 to 270 (MRKNRENIPTLIYFN) are extracellular. The chain crosses the membrane as a helical span at residues 271 to 291 (VIVWVYAPPYACVSLAPLILF). Topologically, residues 292–327 (SLWNLKKQRHIQIKSVQSAQKETQDDYIRKLQKSWK) are cytoplasmic.

Belongs to the nematode receptor-like protein sra family. Expressed in neurons RIF/RIG and PVT.

It is found in the membrane. This Caenorhabditis elegans protein is Serpentine receptor class alpha-12 (sra-12).